A 234-amino-acid chain; its full sequence is Matrix protein 1 (234 aa).

Residues 1 to 103 form a disordered region; sequence MHERSKPKTT…QELAEGGIRM (103 aa). The span at 76-96 shows a compositional bias: basic and acidic residues; that stretch reads CDERSTIGRHGNADERPHQEL. The stretch at 183–234 forms a coiled coil; that stretch reads PEVSFKERMEAEKKKLKELDDKIYKLRRRLRKMEYKKMGINREIDKLEDSVQ.

In terms of assembly, interacts with host HSC70.

The protein localises to the virion. The protein resides in the host cytoplasm. It localises to the host nucleus. May play a role in virus replication, from virus entry and uncoating to assembly and budding of the virus particle. Interaction of viral NEP with M1-Hsc70 is thought to promote nuclear export of the viral encapsidated genomes. This chain is Matrix protein 1, found in Infectious salmon anemia virus (isolate Atlantic salmon/Norway/810/9/99) (ISAV).